Consider the following 349-residue polypeptide: Nicotinate-nucleotide--dimethylbenzimidazole phosphoribosyltransferase (349 aa).

The active-site Proton acceptor is the Glu-318.

It belongs to the CobT family.

The enzyme catalyses 5,6-dimethylbenzimidazole + nicotinate beta-D-ribonucleotide = alpha-ribazole 5'-phosphate + nicotinate + H(+). It participates in nucleoside biosynthesis; alpha-ribazole biosynthesis; alpha-ribazole from 5,6-dimethylbenzimidazole: step 1/2. Catalyzes the synthesis of alpha-ribazole-5'-phosphate from nicotinate mononucleotide (NAMN) and 5,6-dimethylbenzimidazole (DMB). The protein is Nicotinate-nucleotide--dimethylbenzimidazole phosphoribosyltransferase of Alkaliphilus metalliredigens (strain QYMF).